Here is a 331-residue protein sequence, read N- to C-terminus: High-affinity nickel-transport protein NixA (331 aa).

At 1-5 (MKLWF) the chain is on the cytoplasmic side. The chain crosses the membrane as a helical span at residues 6–26 (PYFLAIVFLHALGLALLFMAN). The Periplasmic segment spans residues 27-33 (NASFYAA). A helical membrane pass occupies residues 34–54 (ASMAYMLGAKHAFDADHIACI). Residues 55 to 66 (DNTIRKLTQQGK) lie on the Cytoplasmic side of the membrane. Residues 67-87 (NAYGVGFYFSMGHSSVVILMT) traverse the membrane as a helical segment. The Periplasmic segment spans residues 88–113 (IISAFAIAWAKEHTPMLEEIGGVVGT). Residues 114 to 135 (LVSGLFLLIIGLLNAIILLDLL) traverse the membrane as a helical segment. At 136–178 (KIFKKSHSNESLSQQQNEEIERLLTSRGLLNRFFKPLFNFVSK) the chain is on the cytoplasmic side. Residues 179–199 (SWHIYPIGFLFGLGFDTASEI) traverse the membrane as a helical segment. Residues 200–225 (ALLALSSSAIKVSMVGMLSLPILFAA) lie on the Periplasmic side of the membrane. Residues 226 to 246 (GMSLFDTLDGAFMLKAYDWAF) traverse the membrane as a helical segment. The Cytoplasmic segment spans residues 247–252 (KTPLRK). The chain crosses the membrane as a helical span at residues 253–273 (IYYNISITALSVFIALFIGLI). Residues 274–302 (ELFQVVSEKLHLKFENRLLRALQSLEFTD) lie on the Periplasmic side of the membrane. The chain crosses the membrane as a helical span at residues 303–322 (LGYYLVGLFVIAFLGSFFLW). Over 323-331 (KIKFSKLES) the chain is Cytoplasmic.

It belongs to the NiCoT transporter (TC 2.A.52) family.

The protein localises to the cell inner membrane. High-affinity nickel intake protein. Imports nickel ions in an energy-dependent fashion. Necessary for the expression of catalytically active urease. The chain is High-affinity nickel-transport protein NixA (nixA) from Helicobacter pylori (strain ATCC 700392 / 26695) (Campylobacter pylori).